A 219-amino-acid polypeptide reads, in one-letter code: Octanoyltransferase (219 aa).

One can recognise a BPL/LPL catalytic domain in the interval 32 to 207 (SSSPDQLWIV…TFSHNLGYQN (176 aa)). Residues 71–78 (RGGQVTYH), 138–140 (SLG), and 151–153 (GLA) contribute to the substrate site. The active-site Acyl-thioester intermediate is the Cys169.

Belongs to the LipB family.

It localises to the cytoplasm. The catalysed reaction is octanoyl-[ACP] + L-lysyl-[protein] = N(6)-octanoyl-L-lysyl-[protein] + holo-[ACP] + H(+). It functions in the pathway protein modification; protein lipoylation via endogenous pathway; protein N(6)-(lipoyl)lysine from octanoyl-[acyl-carrier-protein]: step 1/2. Catalyzes the transfer of endogenously produced octanoic acid from octanoyl-acyl-carrier-protein onto the lipoyl domains of lipoate-dependent enzymes. Lipoyl-ACP can also act as a substrate although octanoyl-ACP is likely to be the physiological substrate. The sequence is that of Octanoyltransferase from Shewanella woodyi (strain ATCC 51908 / MS32).